The sequence spans 479 residues: 6-phosphogluconate dehydrogenase, decarboxylating (479 aa).

NADP(+)-binding positions include 10–15, 33–35, 75–77, and Asn-103; these read GLAVMG, NRS, and IKA. Substrate contacts are provided by residues Asn-103 and 129 to 131; that span reads SGG. Residue Lys-183 is the Proton acceptor of the active site. 186 to 187 contributes to the substrate binding site; it reads HN. The Proton donor role is filled by Glu-190. 5 residues coordinate substrate: Tyr-191, Lys-260, Arg-287, Arg-447, and His-453.

It belongs to the 6-phosphogluconate dehydrogenase family. Homodimer.

It carries out the reaction 6-phospho-D-gluconate + NADP(+) = D-ribulose 5-phosphate + CO2 + NADPH. It participates in carbohydrate degradation; pentose phosphate pathway; D-ribulose 5-phosphate from D-glucose 6-phosphate (oxidative stage): step 3/3. Its function is as follows. Catalyzes the oxidative decarboxylation of 6-phosphogluconate to ribulose 5-phosphate and CO(2), with concomitant reduction of NADP to NADPH. The chain is 6-phosphogluconate dehydrogenase, decarboxylating (gnd) from Chlamydia muridarum (strain MoPn / Nigg).